A 185-amino-acid polypeptide reads, in one-letter code: Ion-translocating oxidoreductase complex subunit B (185 aa).

Positions 1 to 26 (MNHILLIILIFAALALIFGLLLGFAA) are hydrophobic. Residues 32–90 (ESDPIVDQLDALLPQTQCGQCGYPGCRPYAEAIANGDSINKCVPGGAQTIQNIADLMGV) enclose the 4Fe-4S domain. 12 residues coordinate [4Fe-4S] cluster: C49, C52, C57, C73, C115, C118, C121, C125, C145, C148, C151, and C155. 2 4Fe-4S ferredoxin-type domains span residues 106 to 135 (RVAF…GAPK) and 136 to 165 (LMHT…MIEL).

This sequence belongs to the 4Fe4S bacterial-type ferredoxin family. RnfB subfamily. In terms of assembly, the complex is composed of six subunits: RnfA, RnfB, RnfC, RnfD, RnfE and RnfG. [4Fe-4S] cluster is required as a cofactor.

Its subcellular location is the cell inner membrane. Its function is as follows. Part of a membrane-bound complex that couples electron transfer with translocation of ions across the membrane. This chain is Ion-translocating oxidoreductase complex subunit B, found in Tolumonas auensis (strain DSM 9187 / NBRC 110442 / TA 4).